The primary structure comprises 1136 residues: Coiled-coil domain-containing protein 136 (1136 aa).

Residues 1–46 form a disordered region; it reads MQAMDGEVLLPALYEEEEEEEEEEEEVEEEQVEKGGSLGSLSMGKH. Acidic residues predominate over residues 14–31; the sequence is YEEEEEEEEEEEEVEEEQ. At Ser-50 the chain carries Phosphoserine. Coiled coils occupy residues 293 to 631 and 681 to 730; these read VMQL…QNQE and LQAL…QTQS. Disordered stretches follow at residues 741–773, 814–837, 965–990, and 1040–1111; these read GKNS…KSYV, GSVS…DPAE, NRPS…NGVR, and KKER…PDPP. A compositionally biased stretch (polar residues) spans 743-752; that stretch reads NSGSRAPSTE. A coiled-coil region spans residues 839-972; that stretch reads EDLEHFEETV…KENRPSISSE (134 aa). Over residues 976 to 989 the composition is skewed to low complexity; that stretch reads KNVNKNMNKNANGV. A coiled-coil region spans residues 1017 to 1057; that stretch reads YYKASQRRLDELMKEEKEIEEARKKEREKKAKKDLCKLATN. Residues 1040-1052 show a composition bias toward basic and acidic residues; it reads KKEREKKAKKDLC. Residues 1067-1091 show a composition bias toward acidic residues; the sequence is EPTEDEEENFEEYREGEDESCEAAE. Residues 1112 to 1132 form a helical membrane-spanning segment; sequence IFSLPLVGLVVISALLWCWWA.

In terms of tissue distribution, present at high level in testis (at protein level).

It is found in the cytoplasmic vesicle. The protein resides in the secretory vesicle. It localises to the acrosome membrane. May play a role in acrosome formation in spermatogenesis and in fertilization. This chain is Coiled-coil domain-containing protein 136 (Ccdc136), found in Mus musculus (Mouse).